The following is a 244-amino-acid chain: 3-deoxy-manno-octulosonate cytidylyltransferase (244 aa).

Belongs to the KdsB family.

The protein localises to the cytoplasm. The enzyme catalyses 3-deoxy-alpha-D-manno-oct-2-ulosonate + CTP = CMP-3-deoxy-beta-D-manno-octulosonate + diphosphate. Its pathway is nucleotide-sugar biosynthesis; CMP-3-deoxy-D-manno-octulosonate biosynthesis; CMP-3-deoxy-D-manno-octulosonate from 3-deoxy-D-manno-octulosonate and CTP: step 1/1. It participates in bacterial outer membrane biogenesis; lipopolysaccharide biosynthesis. Activates KDO (a required 8-carbon sugar) for incorporation into bacterial lipopolysaccharide in Gram-negative bacteria. This Rickettsia canadensis (strain McKiel) protein is 3-deoxy-manno-octulosonate cytidylyltransferase.